Here is a 141-residue protein sequence, read N- to C-terminus: uncharacterized protein (141 aa).

The span at 1 to 39 shows a compositional bias: low complexity; it reads MNNNNNNNNNNNNNNNNNNNNNNNNNSYDSNHSSSSYTS. Residues 1-48 are disordered; that stretch reads MNNNNNNNNNNNNNNNNNNNNNNNNNSYDSNHSSSSYTSENQNREQQF. A helical membrane pass occupies residues 109-129; that stretch reads FFCKIILVFICLVAIYSLVVI.

Its subcellular location is the membrane. This is an uncharacterized protein from Dictyostelium discoideum (Social amoeba).